Consider the following 306-residue polypeptide: BRCA2 and CDKN1A-interacting protein (306 aa).

Over residues 1–10 the composition is skewed to basic residues; sequence MASRPKRRAV. The segment at 1–45 is disordered; it reads MASRPKRRAVSRVPPALGDEEEEDEVEEQDEDDSDEEEDEEDEVV. The segment covering 18–45 has biased composition (acidic residues); the sequence is GDEEEEDEVEEQDEDDSDEEEDEEDEVV. Phosphoserine is present on residues Ser34 and Ser104. The tract at residues 51–159 is interaction with BRCA2; that stretch reads IEFEAYSISD…EKSMVEQLDR (109 aa). Residues 153–251 are interaction with CDKN1A; that stretch reads MVEQLDRLFN…NAEEEFFYEK (99 aa). Position 273 is a phosphoserine (Ser273).

The protein belongs to the BCP1 family. In terms of assembly, interacts with BRCA2, CDKN1A and MTDH/LYRIC. Interacts with DCTN1/p150-glued and ACTR1A/ARP1. Interacts with alpha-, beta- and gamma-tubulins. Interacts with TENT5C; the interaction has no effect on TENT5C poly(A) polymerase function.

The protein localises to the nucleus. Its subcellular location is the cytoplasm. The protein resides in the cytoskeleton. It is found in the microtubule organizing center. It localises to the centrosome. The protein localises to the centriole. Its subcellular location is the spindle pole. Its function is as follows. During interphase, required for microtubule organizing and anchoring activities. During mitosis, required for the organization and stabilization of the spindle pole. May promote cell cycle arrest by enhancing the inhibition of CDK2 activity by CDKN1A. May be required for repair of DNA damage by homologous recombination in conjunction with BRCA2. May not be involved in non-homologous end joining (NHEJ). The chain is BRCA2 and CDKN1A-interacting protein (BCCIP) from Bos taurus (Bovine).